Reading from the N-terminus, the 270-residue chain is Putative phosphoenolpyruvate synthase regulatory protein (270 aa).

150 to 157 (GVSRCGKT) contributes to the ADP binding site.

Belongs to the pyruvate, phosphate/water dikinase regulatory protein family. PSRP subfamily.

The enzyme catalyses [pyruvate, water dikinase] + ADP = [pyruvate, water dikinase]-phosphate + AMP + H(+). The catalysed reaction is [pyruvate, water dikinase]-phosphate + phosphate + H(+) = [pyruvate, water dikinase] + diphosphate. Functionally, bifunctional serine/threonine kinase and phosphorylase involved in the regulation of the phosphoenolpyruvate synthase (PEPS) by catalyzing its phosphorylation/dephosphorylation. The protein is Putative phosphoenolpyruvate synthase regulatory protein of Shewanella piezotolerans (strain WP3 / JCM 13877).